Reading from the N-terminus, the 492-residue chain is AAA-ATPase At3g28520 (492 aa).

A helical transmembrane segment spans residues 7–25 (IWGFTSTTMASIMFLWPMY). 249–256 (GPPGTGKS) lines the ATP pocket. Disordered regions lie at residues 313–334 (KKKK…LKRV) and 462–492 (KIEK…MVTK). Basic and acidic residues-rich tracts occupy residues 323-332 (EEKKEAENLK) and 462-484 (KIEK…EKQN).

This sequence belongs to the AAA ATPase family. BCS1 subfamily. Mg(2+) serves as cofactor.

It localises to the membrane. It carries out the reaction ATP + H2O = ADP + phosphate + H(+). The chain is AAA-ATPase At3g28520 from Arabidopsis thaliana (Mouse-ear cress).